Here is a 533-residue protein sequence, read N- to C-terminus: Probable protein kinase UbiB (533 aa).

Residues 24–44 (LILELPMLPWWLRLLGATLPW) traverse the membrane as a helical segment. The Protein kinase domain maps to 126–494 (RFEREPLASA…WKGSRHDWLG (369 aa)). ATP is bound by residues 132-140 (LASASVAQV) and lysine 154. Aspartate 289 serves as the catalytic Proton acceptor. Residues 510 to 530 (LGQQLEAWPAWVMLAGGVFLI) form a helical membrane-spanning segment.

It belongs to the ABC1 family. UbiB subfamily.

It is found in the cell inner membrane. The protein operates within cofactor biosynthesis; ubiquinone biosynthesis [regulation]. Is probably a protein kinase regulator of UbiI activity which is involved in aerobic coenzyme Q (ubiquinone) biosynthesis. The chain is Probable protein kinase UbiB from Pseudomonas aeruginosa (strain ATCC 15692 / DSM 22644 / CIP 104116 / JCM 14847 / LMG 12228 / 1C / PRS 101 / PAO1).